The following is a 163-amino-acid chain: Oocyte-secreted protein 1 (163 aa).

Residues Met1–Ala21 form the signal peptide.

This sequence belongs to the PLAC1 family. Oocyte-specific.

It is found in the secreted. In terms of biological role, may be involved in cell differentiation. In Bos taurus (Bovine), this protein is Oocyte-secreted protein 1 (OOSP1).